We begin with the raw amino-acid sequence, 83 residues long: Mu-theraphotoxin-Hhn2b 2 (83 aa).

An N-terminal signal peptide occupies residues M1–A21. The propeptide occupies S22 to R48. Intrachain disulfides connect C50–C65, C57–C70, and C64–C77. The residue at position 81 (L81) is a Leucine amide.

It belongs to the neurotoxin 10 (Hwtx-1) family. 14 (Hntx-1) subfamily. As to quaternary structure, monomer. Expressed by the venom gland.

The protein localises to the secreted. In terms of biological role, weakly blocks the rat SCN2A/SCN1B (Nav1.2/beta-1) sodium channel (IC(50)=68 uM) and the insect sodium channel para/tipE (IC(50)=4.3 uM), without altering the activation or inactivation kinetics (depressant toxin). This is Mu-theraphotoxin-Hhn2b 2 from Cyriopagopus hainanus (Chinese bird spider).